We begin with the raw amino-acid sequence, 450 residues long: Histidinol dehydrogenase (450 aa).

Tyr135, Gln197, and Asn225 together coordinate NAD(+). Substrate is bound by residues Thr248, Gln270, and His273. Residues Gln270 and His273 each coordinate Zn(2+). Catalysis depends on proton acceptor residues Glu339 and His340. Substrate is bound by residues His340, Asp373, Glu427, and His432. Asp373 is a binding site for Zn(2+). His432 contributes to the Zn(2+) binding site.

The protein belongs to the histidinol dehydrogenase family. It depends on Zn(2+) as a cofactor.

It carries out the reaction L-histidinol + 2 NAD(+) + H2O = L-histidine + 2 NADH + 3 H(+). Its pathway is amino-acid biosynthesis; L-histidine biosynthesis; L-histidine from 5-phospho-alpha-D-ribose 1-diphosphate: step 9/9. Its function is as follows. Catalyzes the sequential NAD-dependent oxidations of L-histidinol to L-histidinaldehyde and then to L-histidine. This is Histidinol dehydrogenase from Corynebacterium jeikeium (strain K411).